A 176-amino-acid chain; its full sequence is Photosystem I assembly protein Ycf4 (176 aa).

2 helical membrane-spanning segments follow: residues 22–42 (FVWAFILFFGSLEFILVGTAS) and 48–68 (LIAFFPQGMVMIFYGISGLFI).

This sequence belongs to the Ycf4 family.

The protein localises to the plastid thylakoid membrane. In terms of biological role, seems to be required for the assembly of the photosystem I complex. In Cuscuta gronovii (Common dodder), this protein is Photosystem I assembly protein Ycf4.